The sequence spans 545 residues: Zinc finger protein with KRAB and SCAN domains 4 (545 aa).

The tract at residues 1 to 22 is disordered; the sequence is MAREPRKNAALDAQSAEDQTGL. Residues Lys-26 and Lys-29 each participate in a glycyl lysine isopeptide (Lys-Gly) (interchain with G-Cter in SUMO2) cross-link. Residues 34–55 are disordered; that stretch reads ALTAEVRAPCSPARGPERSRQR. In terms of domain architecture, SCAN box spans 53-135; it reads RQRFRGFRYP…VLLEYLERQL (83 aa). Residues Lys-178 and Lys-222 each participate in a glycyl lysine isopeptide (Lys-Gly) (interchain with G-Cter in SUMO2) cross-link. The KRAB domain maps to 221-317; it reads LKMEDVALTL…QRKQKNAIGS (97 aa). 5 C2H2-type zinc fingers span residues 320–342, 348–370, 376–398, 404–426, and 432–454; these read HYCH…RRIH, YECE…QRVH, YECE…QRTH, YECD…HKIH, and YQCN…QRIH. Residues 455-467 show a composition bias toward basic and acidic residues; it reads GDKNVQNPEHGES. The interval 455–480 is disordered; it reads GDKNVQNPEHGESWESQGRTESQWEN. Over residues 468–480 the composition is skewed to polar residues; the sequence is WESQGRTESQWEN. 2 consecutive C2H2-type zinc fingers follow at residues 487–509 and 515–537; these read YKCN…QKIH and YQCD…QRSH.

This sequence belongs to the krueppel C2H2-type zinc-finger protein family. As to expression, expressed in adult heart, brain, placenta, lung and kidney, but not in adult liver and skeletal muscle. In 17-day old embryo, detected in liver, skeletal muscle, brain, heart and small intestine.

It localises to the nucleus. Functionally, may be involved in the transcriptional activation of MDM2 and EP300 genes. This Homo sapiens (Human) protein is Zinc finger protein with KRAB and SCAN domains 4 (ZKSCAN4).